A 498-amino-acid chain; its full sequence is Glycerol kinase (498 aa).

Thr-12 contributes to the ADP binding site. Residues Thr-12, Thr-13, and Ser-14 each coordinate ATP. Position 12 (Thr-12) interacts with sn-glycerol 3-phosphate. Arg-16 serves as a coordination point for ADP. Sn-glycerol 3-phosphate contacts are provided by Arg-82, Glu-83, Tyr-134, and Asp-243. Arg-82, Glu-83, Tyr-134, Asp-243, and Gln-244 together coordinate glycerol. ADP contacts are provided by Thr-265 and Gly-308. The ATP site is built by Thr-265, Gly-308, Gln-312, and Gly-409. ADP is bound by residues Gly-409 and Asn-413.

It belongs to the FGGY kinase family. As to quaternary structure, homotetramer and homodimer (in equilibrium).

The catalysed reaction is glycerol + ATP = sn-glycerol 3-phosphate + ADP + H(+). Its pathway is polyol metabolism; glycerol degradation via glycerol kinase pathway; sn-glycerol 3-phosphate from glycerol: step 1/1. Activated by phosphorylation and inhibited by fructose 1,6-bisphosphate (FBP). Its function is as follows. Key enzyme in the regulation of glycerol uptake and metabolism. Catalyzes the phosphorylation of glycerol to yield sn-glycerol 3-phosphate. This chain is Glycerol kinase, found in Agathobacter rectalis (strain ATCC 33656 / DSM 3377 / JCM 17463 / KCTC 5835 / VPI 0990) (Eubacterium rectale).